The primary structure comprises 257 residues: Probable enoyl-CoA hydratase (257 aa).

It belongs to the enoyl-CoA hydratase/isomerase family.

It carries out the reaction a (3S)-3-hydroxyacyl-CoA = a (2E)-enoyl-CoA + H2O. The enzyme catalyses a 4-saturated-(3S)-3-hydroxyacyl-CoA = a (3E)-enoyl-CoA + H2O. In terms of biological role, could possibly oxidize fatty acids using specific components. The sequence is that of Probable enoyl-CoA hydratase (fadB1) from Rhizobium meliloti (strain 1021) (Ensifer meliloti).